The following is a 332-amino-acid chain: Chitin synthase export chaperone (332 aa).

Transmembrane regions (helical) follow at residues Cys-51 to Val-71, Val-86 to Ala-106, Gly-121 to Tyr-141, Val-149 to Leu-169, Pro-182 to Val-202, Leu-218 to Phe-238, and His-248 to Tyr-268.

Belongs to the CHS7 family. Interacts with CHS3.

It localises to the endoplasmic reticulum membrane. Its function is as follows. Chaperone required for the export of the chitin synthase CHS3 from the endoplasmic reticulum. This Phaeosphaeria nodorum (strain SN15 / ATCC MYA-4574 / FGSC 10173) (Glume blotch fungus) protein is Chitin synthase export chaperone (CHS7).